The primary structure comprises 446 residues: MNKSPRRYHITTFGCQMNKADSERMAGILEDLGFQWSEDANEADLILYNTCTIRDNAEQKVYSYLGRQAKRKQTQPDLTLIVAGCVAQQEGEQLLRRVPEVDLIIGPQHANRLGDLLQQVFDGSQVVATEPIHIMEDITKPRRDSNITAWVNVIYGCNERCTYCVVPGVRGVEQSRTPAAIRAEMAQLGQQGYQEITLLGQNIDAYGRDLPGVTASGRHLHNFTDLLYYVHDVAGIERLRFATSHPRYFTERLIKACQELPKVCEHFHIPFQSGDNDILKAMKRGYTQEKYRQIIANIRDLMPDAAISADAIVGFPGETEAQFENTLKLVDEIGFDQLNTAAYSPRPGTPAAIWDDQLSEQVKSDRLQRLNHLVATKAAERSQRYLGRIEEILVEDVNPKDASQVMGRTRGNRLTFFTGDIEELRGKFVKVKITEVRPFSLTGVIF.

One can recognise an MTTase N-terminal domain in the interval 6–122 (RRYHITTFGC…LGDLLQQVFD (117 aa)). Positions 15, 51, 85, 157, 161, and 164 each coordinate [4Fe-4S] cluster. One can recognise a Radical SAM core domain in the interval 143-380 (RDSNITAWVN…NHLVATKAAE (238 aa)). Residues 383–446 (QRYLGRIEEI…RPFSLTGVIF (64 aa)) form the TRAM domain.

It belongs to the methylthiotransferase family. MiaB subfamily. As to quaternary structure, monomer. The cofactor is [4Fe-4S] cluster.

Its subcellular location is the cytoplasm. The catalysed reaction is N(6)-dimethylallyladenosine(37) in tRNA + (sulfur carrier)-SH + AH2 + 2 S-adenosyl-L-methionine = 2-methylsulfanyl-N(6)-dimethylallyladenosine(37) in tRNA + (sulfur carrier)-H + 5'-deoxyadenosine + L-methionine + A + S-adenosyl-L-homocysteine + 2 H(+). In terms of biological role, catalyzes the methylthiolation of N6-(dimethylallyl)adenosine (i(6)A), leading to the formation of 2-methylthio-N6-(dimethylallyl)adenosine (ms(2)i(6)A) at position 37 in tRNAs that read codons beginning with uridine. The polypeptide is tRNA-2-methylthio-N(6)-dimethylallyladenosine synthase (Microcystis aeruginosa (strain NIES-843 / IAM M-2473)).